The chain runs to 447 residues: tRNA (guanine(37)-N(1))-methyltransferase (447 aa).

S-adenosyl-L-methionine is bound by residues His-241, 285-286 (DL), and 313-314 (DV).

It belongs to the class I-like SAM-binding methyltransferase superfamily. TRM5/TYW2 family. Monomer.

It is found in the mitochondrion matrix. Its subcellular location is the nucleus. The protein localises to the cytoplasm. The enzyme catalyses guanosine(37) in tRNA + S-adenosyl-L-methionine = N(1)-methylguanosine(37) in tRNA + S-adenosyl-L-homocysteine + H(+). In terms of biological role, specifically methylates the N1 position of guanosine-37 in various cytoplasmic and mitochondrial tRNAs. Methylation is not dependent on the nature of the nucleoside 5' of the target nucleoside. This is the first step in the biosynthesis of wybutosine (yW), a modified base adjacent to the anticodon of tRNAs and required for accurate decoding. In Giardia intestinalis (strain ATCC 50803 / WB clone C6) (Giardia lamblia), this protein is tRNA (guanine(37)-N(1))-methyltransferase.